The primary structure comprises 431 residues: Histidinol dehydrogenase (431 aa).

The NAD(+) site is built by Y127, Q189, and N212. Positions 237, 259, and 262 each coordinate substrate. Zn(2+)-binding residues include Q259 and H262. Active-site proton acceptor residues include E326 and H327. Residues H327, D360, E414, and H419 each coordinate substrate. D360 serves as a coordination point for Zn(2+). H419 contributes to the Zn(2+) binding site.

Belongs to the histidinol dehydrogenase family. Requires Zn(2+) as cofactor.

The catalysed reaction is L-histidinol + 2 NAD(+) + H2O = L-histidine + 2 NADH + 3 H(+). It functions in the pathway amino-acid biosynthesis; L-histidine biosynthesis; L-histidine from 5-phospho-alpha-D-ribose 1-diphosphate: step 9/9. In terms of biological role, catalyzes the sequential NAD-dependent oxidations of L-histidinol to L-histidinaldehyde and then to L-histidine. The chain is Histidinol dehydrogenase from Xanthomonas campestris pv. campestris (strain 8004).